The following is a 125-amino-acid chain: Snaclec B6 (125 aa).

Cystine bridges form between cysteine 2/cysteine 13, cysteine 30/cysteine 119, and cysteine 96/cysteine 111. In terms of domain architecture, C-type lectin spans 9-120; sequence HEGHCYKVFK…CNISQYFVCQ (112 aa). An N-linked (GlcNAc...) asparagine glycan is attached at asparagine 95. A glycan (N-linked (GlcNAc...) asparagine) is linked at asparagine 112.

It belongs to the snaclec family. As to quaternary structure, heterodimer; disulfide-linked. As to expression, expressed by the venom gland.

Its subcellular location is the secreted. Interferes with one step of hemostasis (modulation of platelet aggregation, or coagulation cascade, for example). This chain is Snaclec B6, found in Macrovipera lebetinus (Levantine viper).